Consider the following 231-residue polypeptide: Biosynthetic peptidoglycan transglycosylase (231 aa).

The helical transmembrane segment at 7–27 (LLFWLIVVPVLLVLLLQLYFF) threads the bilayer.

Belongs to the glycosyltransferase 51 family.

The protein resides in the cell inner membrane. The catalysed reaction is [GlcNAc-(1-&gt;4)-Mur2Ac(oyl-L-Ala-gamma-D-Glu-L-Lys-D-Ala-D-Ala)](n)-di-trans,octa-cis-undecaprenyl diphosphate + beta-D-GlcNAc-(1-&gt;4)-Mur2Ac(oyl-L-Ala-gamma-D-Glu-L-Lys-D-Ala-D-Ala)-di-trans,octa-cis-undecaprenyl diphosphate = [GlcNAc-(1-&gt;4)-Mur2Ac(oyl-L-Ala-gamma-D-Glu-L-Lys-D-Ala-D-Ala)](n+1)-di-trans,octa-cis-undecaprenyl diphosphate + di-trans,octa-cis-undecaprenyl diphosphate + H(+). The protein operates within cell wall biogenesis; peptidoglycan biosynthesis. Its function is as follows. Peptidoglycan polymerase that catalyzes glycan chain elongation from lipid-linked precursors. In Janthinobacterium sp. (strain Marseille) (Minibacterium massiliensis), this protein is Biosynthetic peptidoglycan transglycosylase.